The sequence spans 339 residues: MKIYYEKDADISLIQKLKVAVVGYGSQGHAHALNLKDSGVKQIKVALQEGSASRKKAEAAGLEVVSVADAAKWADVLMILVPDEKQAVLYANEIEPHLRAGQHLMFGHGFNIHYNLIRPRADVDVSLSAPKGPGHTLRNQYQMGFGLPGLIAIHQDATGSAQAVALSYSKAIGNTRAGVIETSFREETETDLFGEQAVLCGGIVELIKAGYETLVEAGYAPEMAYFECLHETKLIVDLIYEGGIANMNYSISNTAEYGEYVTGPRLVNAETKKEMKKVLEDIQNGTFARNWVLENQAGAPGFHAMRQRMSSHPIEEVGEKLRGMMHWAQNDRLVDKSRN.

Residues 1–182 (MKIYYEKDAD…GNTRAGVIET (182 aa)) form the KARI N-terminal Rossmann domain. NADP(+)-binding positions include 24–27 (YGSQ), serine 51, serine 53, and 83–86 (DEKQ). Histidine 108 is a catalytic residue. Glycine 134 contributes to the NADP(+) binding site. The 146-residue stretch at 183 to 328 (SFREETETDL…EKLRGMMHWA (146 aa)) folds into the KARI C-terminal knotted domain. The Mg(2+) site is built by aspartate 191, glutamate 195, glutamate 227, and glutamate 231. Serine 252 is a substrate binding site.

This sequence belongs to the ketol-acid reductoisomerase family. Requires Mg(2+) as cofactor.

It carries out the reaction (2R)-2,3-dihydroxy-3-methylbutanoate + NADP(+) = (2S)-2-acetolactate + NADPH + H(+). The enzyme catalyses (2R,3R)-2,3-dihydroxy-3-methylpentanoate + NADP(+) = (S)-2-ethyl-2-hydroxy-3-oxobutanoate + NADPH + H(+). It participates in amino-acid biosynthesis; L-isoleucine biosynthesis; L-isoleucine from 2-oxobutanoate: step 2/4. It functions in the pathway amino-acid biosynthesis; L-valine biosynthesis; L-valine from pyruvate: step 2/4. In terms of biological role, involved in the biosynthesis of branched-chain amino acids (BCAA). Catalyzes an alkyl-migration followed by a ketol-acid reduction of (S)-2-acetolactate (S2AL) to yield (R)-2,3-dihydroxy-isovalerate. In the isomerase reaction, S2AL is rearranged via a Mg-dependent methyl migration to produce 3-hydroxy-3-methyl-2-ketobutyrate (HMKB). In the reductase reaction, this 2-ketoacid undergoes a metal-dependent reduction by NADPH to yield (R)-2,3-dihydroxy-isovalerate. This chain is Ketol-acid reductoisomerase (NADP(+)), found in Hyphomonas neptunium (strain ATCC 15444).